The sequence spans 349 residues: MSKMPEEEEFYLFKNISSVGPWDGPQYHIAPVWAFQLQAAFMGIVFLAGLPLNSMVLVATVRYKKLRHPLNYVLVNVSVGGFLLCIFSVLPVFVNSCNGYFVFGRHVCALEGFLGTVAGLVTGWSLAFLAFERYIVICKPFGNFRFSSKHALMVVLTTWTIGIGVSIPPFFGWSRYIAEGLQCSCGPDWYTVGTKYRSEYYTWFLFIFCFIVPLSLICFSYAQLLRALKAVAAQQQESATTQKAEREVSRMVVVMVGSFCVCYVPYAALAMYMVNNRNHGLDLRLVSIPAFFSKSSCIYNPIIYCFMNKQFRACIMEMVCGKAMTDESDISSSQKTEVSTVSSSQVGPN.

The Extracellular portion of the chain corresponds to 1-34; it reads MSKMPEEEEFYLFKNISSVGPWDGPQYHIAPVWA. An N-linked (GlcNAc...) asparagine glycan is attached at Asn15. Residues 35-59 form a helical membrane-spanning segment; the sequence is FQLQAAFMGIVFLAGLPLNSMVLVA. Residues 60–71 lie on the Cytoplasmic side of the membrane; sequence TVRYKKLRHPLN. Residues 72 to 97 form a helical membrane-spanning segment; that stretch reads YVLVNVSVGGFLLCIFSVLPVFVNSC. The Extracellular portion of the chain corresponds to 98–111; sequence NGYFVFGRHVCALE. A disulfide bridge connects residues Cys108 and Cys185. A helical membrane pass occupies residues 112–131; that stretch reads GFLGTVAGLVTGWSLAFLAF. At 132–150 the chain is on the cytoplasmic side; that stretch reads ERYIVICKPFGNFRFSSKH. The helical transmembrane segment at 151 to 174 threads the bilayer; that stretch reads ALMVVLTTWTIGIGVSIPPFFGWS. Topologically, residues 175–200 are extracellular; that stretch reads RYIAEGLQCSCGPDWYTVGTKYRSEY. A helical transmembrane segment spans residues 201-228; the sequence is YTWFLFIFCFIVPLSLICFSYAQLLRAL. The Cytoplasmic segment spans residues 229–250; that stretch reads KAVAAQQQESATTQKAEREVSR. Residues 251–274 traverse the membrane as a helical segment; the sequence is MVVVMVGSFCVCYVPYAALAMYMV. Over 275 to 282 the chain is Extracellular; sequence NNRNHGLD. The chain crosses the membrane as a helical span at residues 283–307; sequence LRLVSIPAFFSKSSCIYNPIIYCFM. At Lys294 the chain carries N6-(retinylidene)lysine. Residues 308-349 are Cytoplasmic-facing; the sequence is NKQFRACIMEMVCGKAMTDESDISSSQKTEVSTVSSSQVGPN.

It belongs to the G-protein coupled receptor 1 family. Opsin subfamily. Phosphorylated on some or all of the serine and threonine residues present in the C-terminal region.

It is found in the cell membrane. Its subcellular location is the photoreceptor inner segment. The protein localises to the cell projection. It localises to the cilium. The protein resides in the photoreceptor outer segment. It is found in the cytoplasm. Its subcellular location is the perinuclear region. Visual pigments are the light-absorbing molecules that mediate vision. They consist of an apoprotein, opsin, covalently linked to cis-retinal. Required for the maintenance of cone outer segment organization in the ventral retina, but not essential for the maintenance of functioning cone photoreceptors. Involved in ensuring correct abundance and localization of retinal membrane proteins. May increase spectral sensitivity in dim light. The protein is Short-wave-sensitive opsin 1 (OPN1SW) of Saimiri boliviensis boliviensis (Bolivian squirrel monkey).